We begin with the raw amino-acid sequence, 576 residues long: Protein HYPER-SENSITIVITY-RELATED 4 (576 aa).

A helical membrane pass occupies residues 55–75 (LATAKTVLTTAASVAATAMLA). ATP is bound at residue 306–313 (GPPGTGKS). A disordered region spans residues 508–532 (DKAKTEKQELENKKKTKEGTDSVVK).

Belongs to the AAA ATPase family. BCS1 subfamily. In terms of assembly, binds to the Yariv phenylglycoside (beta-D-Glc)(3). Requires Mg(2+) as cofactor.

It localises to the membrane. It carries out the reaction ATP + H2O = ADP + phosphate + H(+). The sequence is that of Protein HYPER-SENSITIVITY-RELATED 4 from Arabidopsis thaliana (Mouse-ear cress).